Here is a 150-residue protein sequence, read N- to C-terminus: MRCPFCGYEDTFVIDTREIEDQKVIRRRRECPNCKNRFTTYERIEEKPIMVIKKDGRREPFDRNKLLAGLQRAVVKRNIDNEKLEAIIDEIITNIRKQGVSEITSKEIGKMVLEKLKDLDAVAYVRFASVYQEFSSLEEFAKLLSQMKEE.

A zinc finger spans residues 3 to 34; sequence CPFCGYEDTFVIDTREIEDQKVIRRRRECPNC. The region spanning 49–139 is the ATP-cone domain; sequence IMVIKKDGRR…VYQEFSSLEE (91 aa).

Belongs to the NrdR family. It depends on Zn(2+) as a cofactor.

Functionally, negatively regulates transcription of bacterial ribonucleotide reductase nrd genes and operons by binding to NrdR-boxes. The protein is Transcriptional repressor NrdR of Dictyoglomus turgidum (strain DSM 6724 / Z-1310).